The following is a 513-amino-acid chain: Histidine ammonia-lyase (513 aa).

A cross-link (5-imidazolinone (Ala-Gly)) is located at residues 144–146 (ASG). At serine 145 the chain carries 2,3-didehydroalanine (Ser).

The protein belongs to the PAL/histidase family. Contains an active site 4-methylidene-imidazol-5-one (MIO), which is formed autocatalytically by cyclization and dehydration of residues Ala-Ser-Gly.

The protein localises to the cytoplasm. The catalysed reaction is L-histidine = trans-urocanate + NH4(+). It functions in the pathway amino-acid degradation; L-histidine degradation into L-glutamate; N-formimidoyl-L-glutamate from L-histidine: step 1/3. The chain is Histidine ammonia-lyase from Streptococcus pyogenes serotype M6 (strain ATCC BAA-946 / MGAS10394).